The primary structure comprises 54 residues: MLSWAITFLIIAIIAAVLGFGGIAGTATGIAKILFVVFLVMFIASFFFGRRGRG.

The next 2 helical transmembrane spans lie at 4–24 and 29–49; these read WAITFLIIAIIAAVLGFGGIA and GIAKILFVVFLVMFIASFFFG.

The protein belongs to the UPF0391 family.

It localises to the cell membrane. In Pseudomonas fluorescens (strain Pf0-1), this protein is UPF0391 membrane protein Pfl01_0044.